The following is a 158-amino-acid chain: NADH-quinone oxidoreductase subunit B (158 aa).

The [4Fe-4S] cluster site is built by Cys37, Cys38, Cys102, and Cys132.

This sequence belongs to the complex I 20 kDa subunit family. In terms of assembly, NDH-1 is composed of 14 different subunits. Subunits NuoB, C, D, E, F, and G constitute the peripheral sector of the complex. It depends on [4Fe-4S] cluster as a cofactor.

The protein localises to the cell inner membrane. It carries out the reaction a quinone + NADH + 5 H(+)(in) = a quinol + NAD(+) + 4 H(+)(out). Its function is as follows. NDH-1 shuttles electrons from NADH, via FMN and iron-sulfur (Fe-S) centers, to quinones in the respiratory chain. Couples the redox reaction to proton translocation (for every two electrons transferred, four hydrogen ions are translocated across the cytoplasmic membrane), and thus conserves the redox energy in a proton gradient. The polypeptide is NADH-quinone oxidoreductase subunit B (Bordetella petrii (strain ATCC BAA-461 / DSM 12804 / CCUG 43448)).